The following is a 427-amino-acid chain: Glutamate-1-semialdehyde 2,1-aminomutase (427 aa).

Lysine 265 carries the post-translational modification N6-(pyridoxal phosphate)lysine.

This sequence belongs to the class-III pyridoxal-phosphate-dependent aminotransferase family. HemL subfamily. As to quaternary structure, homodimer. Pyridoxal 5'-phosphate serves as cofactor.

Its subcellular location is the cytoplasm. It carries out the reaction (S)-4-amino-5-oxopentanoate = 5-aminolevulinate. The protein operates within porphyrin-containing compound metabolism; protoporphyrin-IX biosynthesis; 5-aminolevulinate from L-glutamyl-tRNA(Glu): step 2/2. The chain is Glutamate-1-semialdehyde 2,1-aminomutase from Burkholderia lata (strain ATCC 17760 / DSM 23089 / LMG 22485 / NCIMB 9086 / R18194 / 383).